A 117-amino-acid chain; its full sequence is Probable non-functional immunoglobulin heavy variable 7-81 (117 aa).

A signal peptide spans 1–19; the sequence is MDWTWSILFLVAAATGTYS. The framework-1 stretch occupies residues 20–44; that stretch reads QVQLVQSGHEVKQPGASVKVSCKAS. The 98-residue stretch at 20–117 folds into the Ig-like domain; that stretch reads QVQLVQSGHE…EDMAMYYCAR (98 aa). An intrachain disulfide couples Cys41 to Cys115. The interval 45–52 is complementarity-determining-1; the sequence is GYSFTTYG. The framework-2 stretch occupies residues 53–69; the sequence is MNWVPQAPGQGLEWMGW. Positions 70-77 are complementarity-determining-2; that stretch reads FNTYTGNP. A glycan (N-linked (GlcNAc...) asparagine) is linked at Asn76. The interval 78–115 is framework-3; sequence TYAQGFTGRFVFSMDTSASTAYLQISSLKAEDMAMYYC. The segment at 116–117 is complementarity-determining-3; the sequence is AR.

As to quaternary structure, immunoglobulins are composed of two identical heavy chains and two identical light chains; disulfide-linked.

The protein localises to the secreted. It is found in the cell membrane. Its function is as follows. Probable non-functional open reading frame (ORF) of V region of the variable domain of immunoglobulin heavy chains. Non-functional ORF generally cannot participate in the synthesis of a productive immunoglobulin chain due to altered V-(D)-J or switch recombination and/or splicing site (at mRNA level) and/or conserved amino acid change (protein level). Immunoglobulins, also known as antibodies, are membrane-bound or secreted glycoproteins produced by B lymphocytes. In the recognition phase of humoral immunity, the membrane-bound immunoglobulins serve as receptors which, upon binding of a specific antigen, trigger the clonal expansion and differentiation of B lymphocytes into immunoglobulins-secreting plasma cells. Secreted immunoglobulins mediate the effector phase of humoral immunity, which results in the elimination of bound antigens. The antigen binding site is formed by the variable domain of one heavy chain, together with that of its associated light chain. Thus, each immunoglobulin has two antigen binding sites with remarkable affinity for a particular antigen. The variable domains are assembled by a process called V-(D)-J rearrangement and can then be subjected to somatic hypermutations which, after exposure to antigen and selection, allow affinity maturation for a particular antigen. This Homo sapiens (Human) protein is Probable non-functional immunoglobulin heavy variable 7-81.